The primary structure comprises 229 residues: Pdp3-interacting factor 1 (229 aa).

Asp-12 acts as the Nucleophile in catalysis. The Mg(2+) site is built by Asp-12, Asp-14, and Asp-176. Asp-14 functions as the Proton donor in the catalytic mechanism.

This sequence belongs to the HAD-like hydrolase superfamily. In terms of assembly, component of the mst2 complex composed of at least eaf6, mst2, nto1, pdp3, ptf1, ptf2 and tfg3. Mg(2+) serves as cofactor.

Its subcellular location is the cytoplasm. It is found in the nucleus. The enzyme catalyses D-ribitol 5-phosphate + H2O = ribitol + phosphate. It catalyses the reaction D-sorbitol 6-phosphate + H2O = D-sorbitol + phosphate. The catalysed reaction is sn-glycerol 1-phosphate + H2O = glycerol + phosphate. It carries out the reaction D-erythrose 4-phosphate + H2O = D-erythrose + phosphate. Component of the mst2 complex which is a highly specific H3 lysine 14 (H3K14) acetyltransferase that functions together with gcn5 to regulate global levels of H3K14 acetylation (H3K14ac), critical for DNA damage checkpoint activation. Its function is as follows. May also function as a sugar alcohol (polyol) phosphatase that prevents accumulation of toxic levels of polyol phosphates, which can impair glycolysis by inhibiting glucose-6-phosphate isomerase. This is Pdp3-interacting factor 1 from Schizosaccharomyces pombe (strain 972 / ATCC 24843) (Fission yeast).